Reading from the N-terminus, the 234-residue chain is Carboxymethylenebutenolidase 1 (234 aa).

Active-site residues include cysteine 123, aspartate 171, and histidine 201.

It belongs to the dienelactone hydrolase family. In terms of assembly, monomer.

The enzyme catalyses 2-(5-oxo-2,5-dihydrofuran-2-ylidene)acetate + H2O = 4-oxohex-2-enedioate + H(+). It functions in the pathway aromatic compound metabolism; 3-chlorocatechol degradation. Ring cleavage of cyclic ester dienelactone to produce maleylacetate. The sequence is that of Carboxymethylenebutenolidase 1 (tfdEI) from Cupriavidus pinatubonensis (strain JMP 134 / LMG 1197) (Cupriavidus necator (strain JMP 134)).